The primary structure comprises 723 residues: Catalase-peroxidase (723 aa).

Positions 1 to 29 (MDGNDLVENKCPVMHGGITVAGHSNTAWW) are cleaved as a signal peptide. The tryptophyl-tyrosyl-methioninium (Trp-Tyr) (with M-251) cross-link spans 97 to 225 (WHSAGSYRLA…LAAVQMGLIY (129 aa)). The active-site Proton acceptor is the His-98. The segment at residues 225–251 (YVNPEGVNGKSDPLKSAAQVRETFARM) is a cross-link (tryptophyl-tyrosyl-methioninium (Tyr-Met) (with W-97)). His-266 contacts heme b.

This sequence belongs to the peroxidase family. Peroxidase/catalase subfamily. As to quaternary structure, homodimer or homotetramer. It depends on heme b as a cofactor. In terms of processing, formation of the three residue Trp-Tyr-Met cross-link is important for the catalase, but not the peroxidase activity of the enzyme.

It carries out the reaction H2O2 + AH2 = A + 2 H2O. The enzyme catalyses 2 H2O2 = O2 + 2 H2O. Its function is as follows. Bifunctional enzyme with both catalase and broad-spectrum peroxidase activity. The protein is Catalase-peroxidase of Hyphomonas neptunium (strain ATCC 15444).